The sequence spans 349 residues: Peptide transport system ATP-binding protein SapD (349 aa).

The ABC transporter domain maps to 1–259 (MALLDICNLN…PHHPYTQALI (259 aa)). 40–47 (GESGSGKS) provides a ligand contact to ATP.

Belongs to the ABC transporter superfamily.

The protein localises to the cell inner membrane. In terms of biological role, involved in a peptide intake transport system that plays a role in the resistance to antimicrobial peptides. This chain is Peptide transport system ATP-binding protein SapD (sapD), found in Haemophilus influenzae (strain ATCC 51907 / DSM 11121 / KW20 / Rd).